The following is a 404-amino-acid chain: Probable tRNA sulfurtransferase (404 aa).

Residues E61–E166 enclose the THUMP domain. ATP-binding positions include L184 to L185, H209 to F210, R266, G288, and Q297.

It belongs to the ThiI family.

It localises to the cytoplasm. It carries out the reaction [ThiI sulfur-carrier protein]-S-sulfanyl-L-cysteine + a uridine in tRNA + 2 reduced [2Fe-2S]-[ferredoxin] + ATP + H(+) = [ThiI sulfur-carrier protein]-L-cysteine + a 4-thiouridine in tRNA + 2 oxidized [2Fe-2S]-[ferredoxin] + AMP + diphosphate. The enzyme catalyses [ThiS sulfur-carrier protein]-C-terminal Gly-Gly-AMP + S-sulfanyl-L-cysteinyl-[cysteine desulfurase] + AH2 = [ThiS sulfur-carrier protein]-C-terminal-Gly-aminoethanethioate + L-cysteinyl-[cysteine desulfurase] + A + AMP + 2 H(+). The protein operates within cofactor biosynthesis; thiamine diphosphate biosynthesis. Its function is as follows. Catalyzes the ATP-dependent transfer of a sulfur to tRNA to produce 4-thiouridine in position 8 of tRNAs, which functions as a near-UV photosensor. Also catalyzes the transfer of sulfur to the sulfur carrier protein ThiS, forming ThiS-thiocarboxylate. This is a step in the synthesis of thiazole, in the thiamine biosynthesis pathway. The sulfur is donated as persulfide by IscS. This Bacillus cereus (strain G9842) protein is Probable tRNA sulfurtransferase.